Reading from the N-terminus, the 233-residue chain is uncharacterized protein (233 aa).

This is an uncharacterized protein from Acanthamoeba polyphaga (Amoeba).